An 839-amino-acid polypeptide reads, in one-letter code: DNA gyrase subunit A (839 aa).

Residues 46–510 form the Topo IIA-type catalytic domain; that stretch reads LPDARDGLKP…ISEDIDDEDL (465 aa). The O-(5'-phospho-DNA)-tyrosine intermediate role is filled by Tyr-134. The GyrA-box signature appears at 537 to 543; the sequence is QHRGGVG.

This sequence belongs to the type II topoisomerase GyrA/ParC subunit family. In terms of assembly, heterotetramer, composed of two GyrA and two GyrB chains. In the heterotetramer, GyrA contains the active site tyrosine that forms a transient covalent intermediate with DNA, while GyrB binds cofactors and catalyzes ATP hydrolysis.

The protein localises to the cytoplasm. It carries out the reaction ATP-dependent breakage, passage and rejoining of double-stranded DNA.. Functionally, a type II topoisomerase that negatively supercoils closed circular double-stranded (ds) DNA in an ATP-dependent manner to modulate DNA topology and maintain chromosomes in an underwound state. Negative supercoiling favors strand separation, and DNA replication, transcription, recombination and repair, all of which involve strand separation. Also able to catalyze the interconversion of other topological isomers of dsDNA rings, including catenanes and knotted rings. Type II topoisomerases break and join 2 DNA strands simultaneously in an ATP-dependent manner. The chain is DNA gyrase subunit A from Mycoplasma pneumoniae (strain ATCC 29342 / M129 / Subtype 1) (Mycoplasmoides pneumoniae).